The sequence spans 618 residues: MEVKNFAVWDYVVFAALFFISSGIGVFFAIKERKKATSREFLVGGRQMSFGPVGLSLTASFMSAVTVLGTPSEVYRFGASFLVFFIAYLFVILLTSELFLPVFYRSGITSTYEYLQLRFNKPVRYAATVIYIVQTILYTGVVVYAPALALNQVTGFDLWGSVFATGIVCTFYCTLGGLKAVVWTDAFQMVVMIVGFLTVLIQGSTHAGGFHNVLEQSTNGSRLHIFDFDVDPLRRHTFWTITVGGTFTWLGIYGVNQSTIQRCISCKTEKHAKLALYFNLLGLWIILVCAVFSGLIMYSHFKDCDPWTSGIISAPDQLMPYFVMEIFATMPGLPGLFVACAFSGTLSTVASSINALATVTFEDFVKSCFPHLSDKLSTWISKGLCLLFGVMCTSMAVAASVMGGVVQASLSIHGMCGGPMLGLFSLGIVFPFVNWKGALGGLLTGITLSFWVAIGAFIYPAPASKTWPLPLSTDQCIKSNVTATGPPVLSSRPGIADTWYSISYLYYSAVGCLGCIVAGVIISLITGRQRGEDIQPLLIRPVCNLFCFWSKKYKTLCWCGVQHDSGTEQENLENGSARKQGAESVLQNGLRRESLVHVPGYDPKDKSYNNMAFETTHF.

At 1–9 the chain is on the extracellular side; the sequence is MEVKNFAVW. Residues 10-30 traverse the membrane as a helical segment; it reads DYVVFAALFFISSGIGVFFAI. At 31 to 47 the chain is on the cytoplasmic side; the sequence is KERKKATSREFLVGGRQ. A helical membrane pass occupies residues 48-68; that stretch reads MSFGPVGLSLTASFMSAVTVL. Residues 69-82 are Extracellular-facing; that stretch reads GTPSEVYRFGASFL. Residues 83–103 form a helical membrane-spanning segment; the sequence is VFFIAYLFVILLTSELFLPVF. The Cytoplasmic portion of the chain corresponds to 104-128; sequence YRSGITSTYEYLQLRFNKPVRYAAT. A helical transmembrane segment spans residues 129–149; the sequence is VIYIVQTILYTGVVVYAPALA. The Extracellular segment spans residues 150-157; it reads LNQVTGFD. A helical transmembrane segment spans residues 158-178; it reads LWGSVFATGIVCTFYCTLGGL. The Cytoplasmic portion of the chain corresponds to 179-180; the sequence is KA. The chain crosses the membrane as a helical span at residues 181 to 201; that stretch reads VVWTDAFQMVVMIVGFLTVLI. The Extracellular segment spans residues 202–235; the sequence is QGSTHAGGFHNVLEQSTNGSRLHIFDFDVDPLRR. A helical membrane pass occupies residues 236–256; sequence HTFWTITVGGTFTWLGIYGVN. At 257-275 the chain is on the cytoplasmic side; the sequence is QSTIQRCISCKTEKHAKLA. The chain crosses the membrane as a helical span at residues 276-296; it reads LYFNLLGLWIILVCAVFSGLI. Residues 297–321 lie on the Extracellular side of the membrane; it reads MYSHFKDCDPWTSGIISAPDQLMPY. The chain crosses the membrane as a helical span at residues 322–342; it reads FVMEIFATMPGLPGLFVACAF. Residues 343 to 385 lie on the Cytoplasmic side of the membrane; sequence SGTLSTVASSINALATVTFEDFVKSCFPHLSDKLSTWISKGLC. The chain crosses the membrane as a helical span at residues 386–406; that stretch reads LLFGVMCTSMAVAASVMGGVV. Residues 407–411 are Extracellular-facing; that stretch reads QASLS. Residues 412 to 432 form a helical membrane-spanning segment; the sequence is IHGMCGGPMLGLFSLGIVFPF. Over 433–437 the chain is Cytoplasmic; sequence VNWKG. Residues 438-458 form a helical membrane-spanning segment; that stretch reads ALGGLLTGITLSFWVAIGAFI. Topologically, residues 459 to 504 are extracellular; sequence YPAPASKTWPLPLSTDQCIKSNVTATGPPVLSSRPGIADTWYSISY. An N-linked (GlcNAc...) asparagine glycan is attached at asparagine 480. The chain crosses the membrane as a helical span at residues 505 to 525; sequence LYYSAVGCLGCIVAGVIISLI. Over 526-618 the chain is Cytoplasmic; it reads TGRQRGEDIQ…NNMAFETTHF (93 aa).

The protein belongs to the sodium:solute symporter (SSF) (TC 2.A.21) family.

It localises to the apical cell membrane. The catalysed reaction is (S)-lactate(out) + Na(+)(out) = (S)-lactate(in) + Na(+)(in). It catalyses the reaction nicotinate(out) + Na(+)(out) = nicotinate(in) + Na(+)(in). It carries out the reaction pyruvate(out) + Na(+)(out) = pyruvate(in) + Na(+)(in). The enzyme catalyses propanoate(out) + Na(+)(out) = propanoate(in) + Na(+)(in). The catalysed reaction is butanoate(out) + Na(+)(out) = butanoate(in) + Na(+)(in). It catalyses the reaction acetoacetate(out) + Na(+)(out) = acetoacetate(in) + Na(+)(in). With respect to regulation, cotransport of monocarboxylates and nicotinate strongly inhibited by ibuprofen, fenoprofen and ketoprofen. Functionally, acts as an electroneutral and low-affinity sodium (Na(+))-dependent sodium-coupled solute transporter. Catalyzes the transport across the plasma membrane of many monocarboxylates such as lactate, pyruvate, nicotinate, propionate, butyrate and beta-D-hydroxybutyrate. May be responsible for the first step of reabsorption of monocarboxylates from the lumen of the proximal tubule of the kidney and the small intestine. May play also a role in monocarboxylates transport in the retina. This is Sodium-coupled monocarboxylate transporter 2 from Homo sapiens (Human).